A 1586-amino-acid polypeptide reads, in one-letter code: Pentafunctional AROM polypeptide (1586 aa).

The 3-dehydroquinate synthase stretch occupies residues M1–N384. NAD(+)-binding positions include D44–N46, E81–K84, G114–V116, and D119. Residue R130 coordinates 7-phospho-2-dehydro-3-deoxy-D-arabino-heptonate. T139 to T140 serves as a coordination point for NAD(+). Residues D146 and K152 each contribute to the 7-phospho-2-dehydro-3-deoxy-D-arabino-heptonate site. Residue K161 coordinates NAD(+). N162 provides a ligand contact to 7-phospho-2-dehydro-3-deoxy-D-arabino-heptonate. Residues F179–T182 and N190 each bind NAD(+). E194 provides a ligand contact to Zn(2+). 7-phospho-2-dehydro-3-deoxy-D-arabino-heptonate contacts are provided by residues E194–K197 and K250. Residue E260 is the Proton acceptor; for 3-dehydroquinate synthase activity of the active site. 7-phospho-2-dehydro-3-deoxy-D-arabino-heptonate contacts are provided by residues R264–N268 and H271. Position 271 (H271) interacts with Zn(2+). Catalysis depends on H275, which acts as the Proton acceptor; for 3-dehydroquinate synthase activity. 7-phospho-2-dehydro-3-deoxy-D-arabino-heptonate-binding residues include H287 and K356. H287 is a Zn(2+) binding site. Residues V397–V842 form an EPSP synthase region. C824 functions as the For EPSP synthase activity in the catalytic mechanism. Residues S864 to S1056 form a shikimate kinase region. An ATP-binding site is contributed by G871–T878. The segment at L1057 to E1277 is 3-dehydroquinase. The active-site Proton acceptor; for 3-dehydroquinate dehydratase activity is the H1180. The active-site Schiff-base intermediate with substrate; for 3-dehydroquinate dehydratase activity is the K1208. The interval A1290–F1586 is shikimate dehydrogenase.

It in the N-terminal section; belongs to the sugar phosphate cyclases superfamily. Dehydroquinate synthase family. The protein in the 2nd section; belongs to the EPSP synthase family. This sequence in the 3rd section; belongs to the shikimate kinase family. In the 4th section; belongs to the type-I 3-dehydroquinase family. It in the C-terminal section; belongs to the shikimate dehydrogenase family. Homodimer. Zn(2+) serves as cofactor.

Its subcellular location is the cytoplasm. The catalysed reaction is 7-phospho-2-dehydro-3-deoxy-D-arabino-heptonate = 3-dehydroquinate + phosphate. It catalyses the reaction 3-dehydroquinate = 3-dehydroshikimate + H2O. It carries out the reaction shikimate + NADP(+) = 3-dehydroshikimate + NADPH + H(+). The enzyme catalyses shikimate + ATP = 3-phosphoshikimate + ADP + H(+). The catalysed reaction is 3-phosphoshikimate + phosphoenolpyruvate = 5-O-(1-carboxyvinyl)-3-phosphoshikimate + phosphate. Its pathway is metabolic intermediate biosynthesis; chorismate biosynthesis; chorismate from D-erythrose 4-phosphate and phosphoenolpyruvate: step 2/7. It participates in metabolic intermediate biosynthesis; chorismate biosynthesis; chorismate from D-erythrose 4-phosphate and phosphoenolpyruvate: step 3/7. The protein operates within metabolic intermediate biosynthesis; chorismate biosynthesis; chorismate from D-erythrose 4-phosphate and phosphoenolpyruvate: step 4/7. It functions in the pathway metabolic intermediate biosynthesis; chorismate biosynthesis; chorismate from D-erythrose 4-phosphate and phosphoenolpyruvate: step 5/7. Its pathway is metabolic intermediate biosynthesis; chorismate biosynthesis; chorismate from D-erythrose 4-phosphate and phosphoenolpyruvate: step 6/7. The AROM polypeptide catalyzes 5 consecutive enzymatic reactions in prechorismate polyaromatic amino acid biosynthesis. The sequence is that of Pentafunctional AROM polypeptide from Penicillium rubens (strain ATCC 28089 / DSM 1075 / NRRL 1951 / Wisconsin 54-1255) (Penicillium chrysogenum).